The following is a 333-amino-acid chain: Protein-methionine-sulfoxide reductase catalytic subunit MsrP (333 aa).

Positions 1 to 43 form a signal peptide, tat-type signal; the sequence is MHKHRKPTEADVTPESLFYQRRRILKALGISAAALSLPFSAQA. Mo-molybdopterin-binding positions include Asn-87, 90-91, Cys-145, Thr-180, Asn-232, Arg-237, and 248-250; these read YE and NIK.

Belongs to the MsrP family. As to quaternary structure, heterodimer of a catalytic subunit (MsrP) and a heme-binding subunit (MsrQ). Mo-molybdopterin is required as a cofactor. Predicted to be exported by the Tat system. The position of the signal peptide cleavage has not been experimentally proven.

The protein resides in the periplasm. It catalyses the reaction L-methionyl-[protein] + a quinone + H2O = L-methionyl-(S)-S-oxide-[protein] + a quinol. The enzyme catalyses L-methionyl-[protein] + a quinone + H2O = L-methionyl-(R)-S-oxide-[protein] + a quinol. Functionally, part of the MsrPQ system that repairs oxidized periplasmic proteins containing methionine sulfoxide residues (Met-O), using respiratory chain electrons. Thus protects these proteins from oxidative-stress damage caused by reactive species of oxygen and chlorine generated by the host defense mechanisms. MsrPQ is essential for the maintenance of envelope integrity under bleach stress, rescuing a wide series of structurally unrelated periplasmic proteins from methionine oxidation. The catalytic subunit MsrP is non-stereospecific, being able to reduce both (R-) and (S-) diastereoisomers of methionine sulfoxide. The protein is Protein-methionine-sulfoxide reductase catalytic subunit MsrP of Pectobacterium carotovorum subsp. carotovorum (strain PC1).